The chain runs to 152 residues: Transcriptional regulator MraZ (152 aa).

SpoVT-AbrB domains lie at A5–E52 and A81–T124.

This sequence belongs to the MraZ family. As to quaternary structure, forms oligomers.

The protein resides in the cytoplasm. It is found in the nucleoid. Functionally, negatively regulates its own expression and that of the subsequent genes in the proximal part of the division and cell wall (dcw) gene cluster. Acts by binding directly to DNA. May also regulate the expression of genes outside the dcw cluster. This is Transcriptional regulator MraZ from Pectobacterium carotovorum subsp. carotovorum (strain PC1).